A 159-amino-acid chain; its full sequence is Ribosomal RNA large subunit methyltransferase H (159 aa).

S-adenosyl-L-methionine is bound by residues leucine 76 and glycine 108.

It belongs to the RNA methyltransferase RlmH family. As to quaternary structure, homodimer.

The protein localises to the cytoplasm. It carries out the reaction pseudouridine(1915) in 23S rRNA + S-adenosyl-L-methionine = N(3)-methylpseudouridine(1915) in 23S rRNA + S-adenosyl-L-homocysteine + H(+). In terms of biological role, specifically methylates the pseudouridine at position 1915 (m3Psi1915) in 23S rRNA. This is Ribosomal RNA large subunit methyltransferase H from Levilactobacillus brevis (strain ATCC 367 / BCRC 12310 / CIP 105137 / JCM 1170 / LMG 11437 / NCIMB 947 / NCTC 947) (Lactobacillus brevis).